A 190-amino-acid polypeptide reads, in one-letter code: CASP-like protein 1E1 (190 aa).

The segment at 1–23 is disordered; the sequence is MEHESKNKVDGMEMEKGKKESGS. The Cytoplasmic portion of the chain corresponds to 1-28; that stretch reads MEHESKNKVDGMEMEKGKKESGSRKGLE. A helical membrane pass occupies residues 29-49; sequence LTMRVLALVLTMVAATVLGVA. Topologically, residues 50-83 are extracellular; that stretch reads KQTKVVPIKLIPTLPPLNVSTTAKASYLSAFVYN. Asparagine 67 carries N-linked (GlcNAc...) asparagine glycosylation. A helical membrane pass occupies residues 84–104; sequence ISANAIACGYTAISIVIVMIS. Residues 105–111 are Cytoplasmic-facing; that stretch reads KGKRSKS. The chain crosses the membrane as a helical span at residues 112–132; the sequence is LLMAVLIGDLMMVALLFSSTG. Residues 133–163 are Extracellular-facing; the sequence is AAGAIGLMGRHGNKHVMWKKVCGVFGKFCNQ. A helical transmembrane segment spans residues 164-184; sequence AAVSVAITLIASVVFMLLVVL. Over 185-190 the chain is Cytoplasmic; sequence DALKLP.

Belongs to the Casparian strip membrane proteins (CASP) family. As to quaternary structure, homodimer and heterodimers.

The protein resides in the cell membrane. The polypeptide is CASP-like protein 1E1 (Arabidopsis thaliana (Mouse-ear cress)).